Consider the following 496-residue polypeptide: Aspartyl/glutamyl-tRNA(Asn/Gln) amidotransferase subunit B (496 aa).

The protein belongs to the GatB/GatE family. GatB subfamily. Heterotrimer of A, B and C subunits.

It carries out the reaction L-glutamyl-tRNA(Gln) + L-glutamine + ATP + H2O = L-glutaminyl-tRNA(Gln) + L-glutamate + ADP + phosphate + H(+). The catalysed reaction is L-aspartyl-tRNA(Asn) + L-glutamine + ATP + H2O = L-asparaginyl-tRNA(Asn) + L-glutamate + ADP + phosphate + 2 H(+). Allows the formation of correctly charged Asn-tRNA(Asn) or Gln-tRNA(Gln) through the transamidation of misacylated Asp-tRNA(Asn) or Glu-tRNA(Gln) in organisms which lack either or both of asparaginyl-tRNA or glutaminyl-tRNA synthetases. The reaction takes place in the presence of glutamine and ATP through an activated phospho-Asp-tRNA(Asn) or phospho-Glu-tRNA(Gln). The polypeptide is Aspartyl/glutamyl-tRNA(Asn/Gln) amidotransferase subunit B (Prochlorococcus marinus (strain MIT 9303)).